We begin with the raw amino-acid sequence, 81 residues long: Adenoregulin-related peptide (81 aa).

The N-terminal stretch at 1-22 (MAFLKKSLLLVLFLGLVSLSIC) is a signal peptide. Residues 23-43 (EEEKRENEDEEEQEDDEQSEM) constitute a propeptide that is removed on maturation. The segment at 24–46 (EEKRENEDEEEQEDDEQSEMKRG) is disordered. The segment covering 30–40 (EDEEEQEDDEQ) has biased composition (acidic residues). Isoleucine 78 is modified (isoleucine amide). Positions 79-81 (GEQ) are excised as a propeptide.

As to expression, expressed by the skin glands.

The protein resides in the secreted. Functionally, has antibacterial activity against Gram-positive bacterium M.luteus NCT C2665 and against Gram-negative bacterium E.coli K12D31. The polypeptide is Adenoregulin-related peptide (Agalychnis callidryas (Red-eyed tree frog)).